A 1450-amino-acid chain; its full sequence is DNA-directed RNA polymerase RPB1 homolog (1450 aa).

This sequence belongs to the RNA polymerase beta' chain family. As to quaternary structure, part of the viral DNA-directed RNA polymerase that consists of 8 polII-like subunits (RPB1, RPB2, RPB3, RPB5, RPB6, RPB7, RPB9, RPB10), a capping enzyme and a termination factor.

It is found in the virion. It carries out the reaction RNA(n) + a ribonucleoside 5'-triphosphate = RNA(n+1) + diphosphate. In terms of biological role, catalytic component of the DNA-directed RNA polymerase (RNAP) that catalyzes the transcription in the cytoplasm of viral DNA into RNA using the four ribonucleoside triphosphates as substrates. Forms the polymerase active center together with RPB2. Part of the core element with the central large cleft, the clamp element that moves to open and close the cleft and the jaws that are thought to grab the incoming DNA template. In African swine fever virus (isolate Pig/Kenya/KEN-50/1950) (ASFV), this protein is DNA-directed RNA polymerase RPB1 homolog.